Reading from the N-terminus, the 300-residue chain is Type II methyltransferase M.XycI (300 aa).

Residues Arg-109–Thr-129 form a disordered region. A compositionally biased stretch (basic and acidic residues) spans Arg-112–Pro-127.

The protein belongs to the N(4)/N(6)-methyltransferase family. N(4) subfamily.

It catalyses the reaction a 2'-deoxycytidine in DNA + S-adenosyl-L-methionine = an N(4)-methyl-2'-deoxycytidine in DNA + S-adenosyl-L-homocysteine + H(+). In terms of biological role, a beta subtype methylase, recognizes the double-stranded sequence 5'-CCCGGG-3', methylates C-2 on both strands, and protects the DNA from cleavage by the XcyI endonuclease. This Xanthomonas campestris pv. cyanopsidis protein is Type II methyltransferase M.XycI (xcyIM).